The sequence spans 236 residues: Phosphoglycolate phosphatase (236 aa).

Aspartate 23 functions as the Nucleophile in the catalytic mechanism. Positions 23 and 25 each coordinate Mg(2+). A substrate-binding site is contributed by lysine 162. 2 residues coordinate Mg(2+): aspartate 185 and aspartate 189.

The protein belongs to the archaeal SPP-like hydrolase family. Requires Mg(2+) as cofactor.

It catalyses the reaction 2-phosphoglycolate + H2O = glycolate + phosphate. Catalyzes the dephosphorylation of 2-phosphoglycolate. This is Phosphoglycolate phosphatase from Picrophilus torridus (strain ATCC 700027 / DSM 9790 / JCM 10055 / NBRC 100828 / KAW 2/3).